Reading from the N-terminus, the 277-residue chain is Small ribosomal subunit protein uS3 (277 aa).

In terms of domain architecture, KH type-2 spans 43-111 (IRKVMNKDLE…QVQLNIFEVK (69 aa)). The disordered stretch occupies residues 216–277 (FEEQQAQQGN…EAAVEPETKE (62 aa)). Basic and acidic residues predominate over residues 264-277 (EVSKEAAVEPETKE).

Belongs to the universal ribosomal protein uS3 family. Part of the 30S ribosomal subunit. Forms a tight complex with proteins S10 and S14.

Functionally, binds the lower part of the 30S subunit head. Binds mRNA in the 70S ribosome, positioning it for translation. In Bifidobacterium animalis subsp. lactis (strain AD011), this protein is Small ribosomal subunit protein uS3.